The primary structure comprises 452 residues: Packaging protein 1 (452 aa).

The disordered stretch occupies residues 1–78 (MLPCRSTGRR…AKPPQRGSLL (78 aa)). 173–180 (GPTGCGKS) provides a ligand contact to ATP. Residues 442–452 (RAYHVRKNKYQ) are DNA-binding.

It belongs to the adenoviridae packaging protein 1 family. As to quaternary structure, homodimer. Part of a genome packaging complex composed of packaging proteins 1, 2 and 3; this complex specifically binds to the packaging sequence on the left end of viral genomic DNA and performs packaging of the viral genome. Interacts with protein 33K.

Its subcellular location is the virion. It is found in the host nucleus. The protein localises to the host nucleoplasm. It localises to the host nucleolus. Functionally, component of the packaging machinery which encapsidates the viral DNA into preformed capsids and transcriptional activator of the viral major late promoter (MLP). Binds, along with packaging proteins 2 and 3, to the specific packaging sequence on the left end of viral genomic DNA and displays ATPase activity thereby providing the power stroke of the packaging machinery. The activity of packaging protein IVa2 is stimulated by protein 33K which acts as a terminase. May be the protein that pumps DNA into the capsid powered by ATP hydrolysis. Specifically binds to the 5'-CG-3' nucleotides of the repeats making up the packaging sequence. Component of the DEF-A and DEF-B transcription factors that bind downstream elements of the major late promoter (MLP), and stimulate transcription from the MLP after initiation of viral DNA replication. DEF-A is a heterodimer packaging proteins 1 and 2 and DEF-B is a homodimer of packaging protein 1. This chain is Packaging protein 1, found in Homo sapiens (Human).